The primary structure comprises 238 residues: 1-(5-phosphoribosyl)-5-[(5-phosphoribosylamino)methylideneamino] imidazole-4-carboxamide isomerase (238 aa).

Catalysis depends on Asp-8, which acts as the Proton acceptor. Residue Asp-129 is the Proton donor of the active site.

The protein belongs to the HisA/HisF family.

It is found in the cytoplasm. It catalyses the reaction 1-(5-phospho-beta-D-ribosyl)-5-[(5-phospho-beta-D-ribosylamino)methylideneamino]imidazole-4-carboxamide = 5-[(5-phospho-1-deoxy-D-ribulos-1-ylimino)methylamino]-1-(5-phospho-beta-D-ribosyl)imidazole-4-carboxamide. Its pathway is amino-acid biosynthesis; L-histidine biosynthesis; L-histidine from 5-phospho-alpha-D-ribose 1-diphosphate: step 4/9. The sequence is that of 1-(5-phosphoribosyl)-5-[(5-phosphoribosylamino)methylideneamino] imidazole-4-carboxamide isomerase from Clostridium novyi (strain NT).